We begin with the raw amino-acid sequence, 1587 residues long: NHS-like protein 1 (1587 aa).

Ser-24 carries the phosphoserine modification. Disordered regions lie at residues 140 to 163 (FAAGSSPCDDYQDEDTEADRKCSL) and 176 to 202 (RPKTPTSGDFSDLHTQTNWTKSLPLPT). The span at 179 to 196 (TPTSGDFSDLHTQTNWTK) shows a compositional bias: polar residues. Phosphoserine is present on residues Ser-197 and Ser-328. Positions 431 to 446 (SAGQLDSRTPGSSSYS) are enriched in polar residues. 2 disordered regions span residues 431–470 (SAGQLDSRTPGSSSYSKIKPRDRPTPRCSVKDDHQSPRHH) and 549–584 (SEPWEYKTSSNGRASPLKPHLATPGCSTPTSNVSSC). A compositionally biased stretch (basic and acidic residues) spans 449-470 (KPRDRPTPRCSVKDDHQSPRHH). At Ser-563 the chain carries Phosphoserine. Residues 573-584 (GCSTPTSNVSSC) are compositionally biased toward polar residues. Ser-629 is modified (phosphoserine). 3 disordered regions span residues 661–687 (KAKKPPLPPSRTDSLRRIPKKNNQTNG), 705–767 (SLPG…SSVK), and 789–1059 (NPTG…RPPM). Residues 705–720 (SLPGKGGSSPSQSPCS) are compositionally biased toward low complexity. 4 stretches are compositionally biased toward polar residues: residues 730-750 (SRSQSIVSEGSSLTSTTTPNV), 757-767 (TPSQSDTSSVK), 792-801 (GGCSANTEAA), and 838-855 (RVTSPSSGYSSQSNTPTA). Over residues 885–911 (SLISSMSISSSSTSLSSNTSTEGSGTM) the composition is skewed to low complexity. 3 stretches are compositionally biased toward pro residues: residues 923 to 934 (APPPPPLPPLPS), 958 to 972 (PLPPSPMFPPPPPEA), and 998 to 1021 (SLPPVPAPPPFLPSSEPPPAPPLD). Residues 1040–1055 (SSREALRRPANKEEGC) show a composition bias toward basic and acidic residues. A Phosphoserine modification is found at Ser-1079. 2 disordered regions span residues 1083 to 1534 (AVLF…ARRA) and 1565 to 1587 (VDGIGRAEGNGPSEQCGGTEQKS). Polar residues-rich tracts occupy residues 1089-1099 (PSAQEQRTPTA) and 1112-1141 (SRNSINEMESESQAASVTSSLPMPAKSQSQ). Phosphoserine is present on residues Ser-1157 and Ser-1218. A compositionally biased stretch (basic and acidic residues) spans 1222–1234 (AEGEAVRSQEEKS). Polar residues predominate over residues 1275–1285 (QPNTSPGPTQE). A compositionally biased stretch (basic and acidic residues) spans 1360–1370 (GRKDSEDDHTR). Phosphoserine is present on residues Ser-1373 and Ser-1375. Thr-1379 carries the post-translational modification Phosphothreonine. Residues 1392-1409 (QVGSIQRSIKKSTTSSDN) are compositionally biased toward polar residues. Positions 1434-1447 (KSTDPRFQRSRSEP) are enriched in basic and acidic residues. 2 stretches are compositionally biased toward low complexity: residues 1448 to 1460 (SADSPDSPSSCSP) and 1484 to 1503 (SGPRYSRSRTPPSAASSRYS). A compositionally biased stretch (polar residues) spans 1576 to 1587 (PSEQCGGTEQKS).

This sequence belongs to the NHS family.

In Mus musculus (Mouse), this protein is NHS-like protein 1 (Nhsl1).